A 412-amino-acid chain; its full sequence is Putative potassium channel protein RPA4233 (412 aa).

Transmembrane regions (helical) follow at residues 35 to 55, 65 to 85, 164 to 184, 202 to 222, and 225 to 245; these read FIVF…VPAM, ALEL…IWIA, LMAC…AMHI, WWAI…ATGI, and MVAS…VGIV. The short motif at 210–215 is the Selectivity filter element; it reads TIGYGD. 270–388 contributes to the a nucleoside 3',5'-cyclic phosphate binding site; the sequence is LFSHLTAGDI…RKINQIVEGR (119 aa).

The protein belongs to the potassium channel family.

It localises to the cell membrane. This chain is Putative potassium channel protein RPA4233, found in Rhodopseudomonas palustris (strain ATCC BAA-98 / CGA009).